The chain runs to 369 residues: D-alanine--D-alanine ligase (369 aa).

Residues 152-359 (KKLFAAEGLP…YPSLLATMVE (208 aa)) form the ATP-grasp domain. Residue 180 to 235 (RERLGLPVFVKPARGGSSIGVSRVSSWDELDAAVAAARDHDPKVIVEAAIAGRELE) participates in ATP binding. Residues D314, E326, and N328 each coordinate Mg(2+).

The protein belongs to the D-alanine--D-alanine ligase family. Mg(2+) is required as a cofactor. Mn(2+) serves as cofactor.

It localises to the cytoplasm. It carries out the reaction 2 D-alanine + ATP = D-alanyl-D-alanine + ADP + phosphate + H(+). It participates in cell wall biogenesis; peptidoglycan biosynthesis. In terms of biological role, cell wall formation. This Mycolicibacterium paratuberculosis (strain ATCC BAA-968 / K-10) (Mycobacterium paratuberculosis) protein is D-alanine--D-alanine ligase.